The sequence spans 557 residues: CCR4-NOT transcription complex subunit 6 (557 aa).

LRR repeat units follow at residues 52–73 (HLTA…IAKL), 75–96 (NLVY…LGNM), 98–120 (SLRE…GKLF), and 121–143 (QLQT…YQEP). Residues 153 to 557 (LLDNLSGTAK…VNGIHLPGRR (405 aa)) are nuclease domain. E240 serves as a coordination point for Mg(2+). Substrate is bound by residues E240, E276, H361, and P366. Residue D412 coordinates Mg(2+). Catalysis depends on D412, which acts as the Proton donor/acceptor. Substrate is bound by residues N414, N481, and F486.

Belongs to the CCR4/nocturin family. In terms of assembly, component of the CCR4-NOT complex; distinct complexes seem to exist that differ in the participation of probably mutually exclusive catalytic subunits; the complex contains two deadenylase subunits, CNOT6 or CNOT6L, and CNOT7 or CNOT8. Interacts with CNOT7 and CNOT8. Interacts with UNR. Interacts with ZFP36L1 (via N-terminus). Interacts with ZNF335. The cofactor is Mg(2+).

It is found in the cytoplasm. Its subcellular location is the nucleus. The catalysed reaction is Exonucleolytic cleavage of poly(A) to 5'-AMP.. Its function is as follows. Poly(A) nuclease with 3'-5' RNase activity. Catalytic component of the CCR4-NOT complex which is one of the major cellular mRNA deadenylases and is linked to various cellular processes including bulk mRNA degradation, miRNA-mediated repression, translational repression during translational initiation and general transcription regulation. Additional complex functions may be a consequence of its influence on mRNA expression. Involved in mRNA decay mediated by the major-protein-coding determinant of instability (mCRD) of the FOS gene in the cytoplasm. In the presence of ZNF335, enhances ligand-dependent transcriptional activity of nuclear hormone receptors, including RARA. The increase of ligand-dependent ESR1-mediated transcription is much smaller, if any. Mediates cell proliferation and cell survival and prevents cellular senescence. This chain is CCR4-NOT transcription complex subunit 6 (CNOT6), found in Homo sapiens (Human).